The following is a 100-amino-acid chain: Aspartyl/glutamyl-tRNA(Asn/Gln) amidotransferase subunit C (100 aa).

This sequence belongs to the GatC family. As to quaternary structure, heterotrimer of A, B and C subunits.

The catalysed reaction is L-glutamyl-tRNA(Gln) + L-glutamine + ATP + H2O = L-glutaminyl-tRNA(Gln) + L-glutamate + ADP + phosphate + H(+). It catalyses the reaction L-aspartyl-tRNA(Asn) + L-glutamine + ATP + H2O = L-asparaginyl-tRNA(Asn) + L-glutamate + ADP + phosphate + 2 H(+). In terms of biological role, allows the formation of correctly charged Asn-tRNA(Asn) or Gln-tRNA(Gln) through the transamidation of misacylated Asp-tRNA(Asn) or Glu-tRNA(Gln) in organisms which lack either or both of asparaginyl-tRNA or glutaminyl-tRNA synthetases. The reaction takes place in the presence of glutamine and ATP through an activated phospho-Asp-tRNA(Asn) or phospho-Glu-tRNA(Gln). This Streptococcus pyogenes serotype M49 (strain NZ131) protein is Aspartyl/glutamyl-tRNA(Asn/Gln) amidotransferase subunit C.